Here is a 321-residue protein sequence, read N- to C-terminus: Olfactory receptor 3A2 (321 aa).

The Extracellular segment spans residues 1–35 (MSLQKLMEPEAGTNRTAVAEFILLGLVQTEEMQPV). Asparagine 14 carries N-linked (GlcNAc...) asparagine glycosylation. Residues 36–58 (VFVLLLFAYLVTTGGNLSILAAV) traverse the membrane as a helical segment. Residues 59–66 (LVEPKLHA) lie on the Cytoplasmic side of the membrane. The chain crosses the membrane as a helical span at residues 67–88 (PMYFFLGNLSVLDVGCITVTVP). At 89 to 109 (AMLGRLLSHKSTISYDACLSQ) the chain is on the extracellular side. Cysteine 106 and cysteine 198 are joined by a disulfide. Residues 110-129 (LFFFHLLAGMDCFLLTAMAY) traverse the membrane as a helical segment. Over 130–149 (DRLLAICQPLTYSTRMSQTV) the chain is Cytoplasmic. Residues 150 to 167 (QRMLVAASLACAFTNALT) traverse the membrane as a helical segment. Topologically, residues 168-205 (HTVAMSTLNFCGPNEVNHFYCDLPQLFQLSCSSTQLNE) are extracellular. The chain crosses the membrane as a helical span at residues 206–229 (LLLFAVGFIMAGTPLVLIITAYSH). Residues 230–246 (VAAAVLRIRSVEGRKKA) are Cytoplasmic-facing. A helical membrane pass occupies residues 247-270 (FSTCGSHLTVVCLFFGRGIFNYMR). Topologically, residues 271–281 (LGSEEASDKDK) are extracellular. Residues 282–301 (GVGVFNTVINPMLNPLIYSL) traverse the membrane as a helical segment. The Cytoplasmic segment spans residues 302 to 321 (RNPDVQGALWQIFLGRRSLT).

It belongs to the G-protein coupled receptor 1 family.

It is found in the cell membrane. Functionally, odorant receptor. This Homo sapiens (Human) protein is Olfactory receptor 3A2 (OR3A2).